Here is a 465-residue protein sequence, read N- to C-terminus: ATP synthase subunit beta (465 aa).

An ATP-binding site is contributed by 148 to 155; that stretch reads GGAGVGKT.

Belongs to the ATPase alpha/beta chains family. F-type ATPases have 2 components, CF(1) - the catalytic core - and CF(0) - the membrane proton channel. CF(1) has five subunits: alpha(3), beta(3), gamma(1), delta(1), epsilon(1). CF(0) has three main subunits: a(1), b(2) and c(9-12). The alpha and beta chains form an alternating ring which encloses part of the gamma chain. CF(1) is attached to CF(0) by a central stalk formed by the gamma and epsilon chains, while a peripheral stalk is formed by the delta and b chains.

It is found in the cell inner membrane. The catalysed reaction is ATP + H2O + 4 H(+)(in) = ADP + phosphate + 5 H(+)(out). Its function is as follows. Produces ATP from ADP in the presence of a proton gradient across the membrane. The catalytic sites are hosted primarily by the beta subunits. The sequence is that of ATP synthase subunit beta from Chromobacterium violaceum (strain ATCC 12472 / DSM 30191 / JCM 1249 / CCUG 213 / NBRC 12614 / NCIMB 9131 / NCTC 9757 / MK).